We begin with the raw amino-acid sequence, 249 residues long: Tetraspanin-7 (249 aa).

Topologically, residues 1-16 (MASRRMETKPVITCLK) are cytoplasmic. The chain crosses the membrane as a helical span at residues 17 to 40 (TLLIIYSFVFWITGVILLAVGVWG). The Extracellular segment spans residues 41–56 (KLTLGTYISLIAENST). The N-linked (GlcNAc...) asparagine glycan is linked to asparagine 54. A helical membrane pass occupies residues 57–75 (NAPYVLIGTGTTIVVFGLF). The Cytoplasmic portion of the chain corresponds to 76–86 (GCFATCRGSPW). A helical membrane pass occupies residues 87–112 (MLKLYAMFLSLVFLAELVAGISGFVF). The Extracellular portion of the chain corresponds to 113-213 (RHEIKDTFLR…LVTSFMETNM (101 aa)). 4 N-linked (GlcNAc...) asparagine glycosylation sites follow: asparagine 155, asparagine 158, asparagine 177, and asparagine 188. Residues 214-234 (GIIAGVAFGIAFSQLIGMLLA) traverse the membrane as a helical segment. Over 235 to 249 (CCLSRFITANQYEMV) the chain is Cytoplasmic.

The protein belongs to the tetraspanin (TM4SF) family. (Microbial infection) Interacts with herpes simplex virus 1 (HHV-1) UL35. As to expression, not solely expressed in T-cells. Expressed in acute myelocytic leukemia cells of some patients.

The protein resides in the membrane. May be involved in cell proliferation and cell motility. The protein is Tetraspanin-7 (TSPAN7) of Homo sapiens (Human).